The sequence spans 176 residues: Large ribosomal subunit protein uL6 (176 aa).

This sequence belongs to the universal ribosomal protein uL6 family. As to quaternary structure, part of the 50S ribosomal subunit.

Functionally, this protein binds to the 23S rRNA, and is important in its secondary structure. It is located near the subunit interface in the base of the L7/L12 stalk, and near the tRNA binding site of the peptidyltransferase center. The sequence is that of Large ribosomal subunit protein uL6 from Lactobacillus gasseri (strain ATCC 33323 / DSM 20243 / BCRC 14619 / CIP 102991 / JCM 1131 / KCTC 3163 / NCIMB 11718 / NCTC 13722 / AM63).